The sequence spans 261 residues: Ribosomal RNA large subunit methyltransferase E (261 aa).

S-adenosyl-L-methionine is bound by residues G81, W83, D104, D120, and D144. K184 (proton acceptor) is an active-site residue. Residues 233–261 (GNALGHEVEDDGPMPHDPREDATADEDQD) form a disordered region. The span at 245 to 254 (PMPHDPREDA) shows a compositional bias: basic and acidic residues.

This sequence belongs to the class I-like SAM-binding methyltransferase superfamily. RNA methyltransferase RlmE family.

The protein localises to the cytoplasm. It catalyses the reaction uridine(2552) in 23S rRNA + S-adenosyl-L-methionine = 2'-O-methyluridine(2552) in 23S rRNA + S-adenosyl-L-homocysteine + H(+). Its function is as follows. Specifically methylates the uridine in position 2552 of 23S rRNA at the 2'-O position of the ribose in the fully assembled 50S ribosomal subunit. In Allorhizobium ampelinum (strain ATCC BAA-846 / DSM 112012 / S4) (Agrobacterium vitis (strain S4)), this protein is Ribosomal RNA large subunit methyltransferase E.